Consider the following 406-residue polypeptide: Probable transcription factor FPSE_09188 (406 aa).

Positions 1 to 72 (MELPTYAVSQ…PKGSSSRCNG (72 aa)) are disordered. A compositionally biased stretch (low complexity) spans 7 to 20 (AVSQSLLASRSVSS).

Belongs to the bZIP family.

It is found in the nucleus. Functionally, the two putative transcription factors FPSE_09188 and FPSE_09189 could be responsible for orchestrating expression of the W493 A and B biosynthesis cluster genes. W493 A and B consist of six amino acid residues D-allo-thr, L-Ala, D-Ala, L-Gln, D-Tyr, and L-Val/L-Ile linked to a 3-hydroxy-4-methyltetradecanoic acid polyketide chain. The polypeptide is Probable transcription factor FPSE_09188 (Fusarium pseudograminearum (strain CS3096) (Wheat and barley crown-rot fungus)).